The following is a 197-amino-acid chain: uncharacterized protein (197 aa).

Residues 1–135 (MKTPWKFLAR…ERGKRANARV (135 aa)) form a disordered region. Residues 14–32 (RQPSGKTQESSAGNDTGSK) are compositionally biased toward polar residues. The segment covering 83-96 (IHADEAQTTARDEA) has biased composition (basic and acidic residues). Over residues 116–132 (SQRKPRIKRRERGKRAN) the composition is skewed to basic residues.

To Rhizobium NGR234A y4nF and y4aO.

This is an uncharacterized protein from Rhizobium meliloti (strain 1021) (Ensifer meliloti).